Reading from the N-terminus, the 759-residue chain is Rho GTPase-activating protein 26 (759 aa).

In terms of domain architecture, BAR spans 7–262; it reads EFSDCYLDSP…MKENPHEHLA (256 aa). One can recognise a PH domain in the interval 265–369; sequence PYTMEGYLYV…WMEAMDGREP (105 aa). The Rho-GAP domain maps to 383 to 568; that stretch reads AQLDNIGFSI…IIIENYEKMF (186 aa). Positions 578–701 are disordered; sequence NSQLHLSRKR…STSSDSSPVS (124 aa). Residues 608–617 show a composition bias toward basic and acidic residues; the sequence is HNTEKEEKRN. A compositionally biased stretch (low complexity) spans 618–637; sequence SVNSSAESVSSSNANSSANS. Over residues 638–650 the composition is skewed to polar residues; that stretch reads TCTQCSNMNNLNA. Residues 679-701 are compositionally biased toward low complexity; sequence PMFSAPSSPMPTSSTSSDSSPVS. One can recognise an SH3 domain in the interval 701–759; sequence SVPRKAKALYACKAEHDSELSFSAGTVFDNVYPSQEPGWLEGILNGKTGLIPENYVEFL.

It is found in the cell junction. It localises to the focal adhesion. Its subcellular location is the cytoplasm. The protein resides in the cytoskeleton. The protein localises to the endosome membrane. Its function is as follows. GTPase-activating protein for rhoa and cdc42. This is Rho GTPase-activating protein 26 (arhgap26) from Xenopus tropicalis (Western clawed frog).